A 180-amino-acid polypeptide reads, in one-letter code: Putative manganese efflux pump MntP (180 aa).

6 consecutive transmembrane segments (helical) span residues 6–26 (LMALAVALGTDALSLSVGIGL), 34–54 (ILQISATVLLFHIFMPLTGWL), 67–87 (AAVIGSLLLVGLGVKMIWAAW), 102–122 (FWGLLLLGASVSMDALSAGFT), 131–151 (LLAAGVIGLVAGAMTAGGLVF), and 160–180 (GERAQLLGGLILVGIGIKLFF).

This sequence belongs to the MntP (TC 9.B.29) family.

The protein localises to the cell membrane. Its function is as follows. Probably functions as a manganese efflux pump. This Pelotomaculum thermopropionicum (strain DSM 13744 / JCM 10971 / SI) protein is Putative manganese efflux pump MntP.